The primary structure comprises 179 residues: Interleukin-22 (179 aa).

Positions 1–33 (MAALQKSVSSFLMGTLATSCLLLLALLVQGGAA) are cleaved as a signal peptide. 2 cysteine pairs are disulfide-bonded: C40–C132 and C89–C178. N54, N68, and N97 each carry an N-linked (GlcNAc...) asparagine glycan.

Belongs to the IL-10 family.

The protein localises to the secreted. Functionally, cytokine that plays a critical role in modulating tissue responses during inflammation. Plays an essential role in the regeneration of epithelial cells to maintain barrier function after injury and for the prevention of further tissue damage. Unlike most of the cytokines, has no effect on immune cells. Signals through a heterodimeric receptor composed of two subunits, the specific receptor IL22RA1 which is present on non-immune cells in many organs and the shared subunit IL10RB. Ligation of IL22RA1 with IL22 induces activation of the tyrosine kinases JAK1 and TYK2, which in turn activates STAT3. In turn, promotes cell survival and proliferation through STAT3, ERK1/2 and PI3K/AKT pathways. Promotes phosphorylation of GSK3B at 'Ser-9' and CTTN. Promotes epithelial cell spreading. The sequence is that of Interleukin-22 (IL22) from Homo sapiens (Human).